The following is a 90-amino-acid chain: Small ribosomal subunit protein bS20 (90 aa).

Polar residues predominate over residues 1-10 (MANHKSTQKS). Residues 1 to 25 (MANHKSTQKSIRQDQKRNLINKSRK) form a disordered region.

Belongs to the bacterial ribosomal protein bS20 family.

Binds directly to 16S ribosomal RNA. In Orientia tsutsugamushi (strain Boryong) (Rickettsia tsutsugamushi), this protein is Small ribosomal subunit protein bS20.